The primary structure comprises 86 residues: Allergen Api g 5 (86 aa).

Residue Asn62 is glycosylated (N-linked (GlcNAc...) asparagine).

This sequence belongs to the oxygen-dependent FAD-linked oxidoreductase family. FAD serves as cofactor. Post-translationally, carries MUXF and MMXF, two complex N-linked glycans with alpha-1,3-fucose and beta-1,2-xylose residues in their structures. MMXF is added to Asn-62.

In Apium graveolens (Celery), this protein is Allergen Api g 5.